A 353-amino-acid chain; its full sequence is Quinolinate synthase (353 aa).

Residues His47 and Ser68 each contribute to the iminosuccinate site. Cys113 is a binding site for [4Fe-4S] cluster. Residues 139-141 and Ser156 each bind iminosuccinate; that span reads YAN. Cys200 is a [4Fe-4S] cluster binding site. Iminosuccinate is bound by residues 226–228 and Thr243; that span reads HPE. Cys297 serves as a coordination point for [4Fe-4S] cluster.

This sequence belongs to the quinolinate synthase family. Type 1 subfamily. [4Fe-4S] cluster is required as a cofactor.

The protein localises to the cytoplasm. It catalyses the reaction iminosuccinate + dihydroxyacetone phosphate = quinolinate + phosphate + 2 H2O + H(+). It participates in cofactor biosynthesis; NAD(+) biosynthesis; quinolinate from iminoaspartate: step 1/1. Its function is as follows. Catalyzes the condensation of iminoaspartate with dihydroxyacetone phosphate to form quinolinate. This is Quinolinate synthase from Pectobacterium carotovorum subsp. carotovorum (strain PC1).